Here is a 176-residue protein sequence, read N- to C-terminus: uncharacterized protein (176 aa).

This is an uncharacterized protein from Methanocaldococcus jannaschii (strain ATCC 43067 / DSM 2661 / JAL-1 / JCM 10045 / NBRC 100440) (Methanococcus jannaschii).